The following is a 350-amino-acid chain: CMP-N-acetylneuraminate-beta-galactosamide-alpha-2,3-sialyltransferase 2 (350 aa).

Topologically, residues 1-6 (MKCSLR) are cytoplasmic. Residues 7 to 27 (VWFLSMAFLLVFIMSLLFTYS) traverse the membrane as a helical; Signal-anchor for type II membrane protein segment. Over 28 to 350 (HHSMATLPYL…ASKIEVYRGN (323 aa)) the chain is Lumenal. Disulfide bonds link Cys70/Cys75, Cys72/Cys149, and Cys152/Cys291. Substrate contacts are provided by Gln116, Asn157, and Asn180. A glycan (N-linked (GlcNAc...) asparagine) is linked at Asn211. Substrate-binding residues include Tyr240, Tyr276, Gly280, Gly300, His309, and His326.

It belongs to the glycosyltransferase 29 family. Homodimer; disulfide-linked. Homodimer formation occurs in the endoplasmic reticulum. Post-translationally, the soluble form derives from the membrane form by proteolytic processing. N-glycosylated; necessary for proper exit from endoplasmic reticulum and trafficking to the Golgi apparatus. As to expression, strongly expressed in brain and liver and to a lesser extent in heart and kidney. Scarcely detectable in lung, pancreas, spleen and submaxillary gland. Expressed in L5 dorsal root ganglion (DRG) neurons (at protein level).

It is found in the golgi apparatus. It localises to the golgi stack membrane. The protein localises to the secreted. It catalyses the reaction a beta-D-galactosyl-(1-&gt;3)-N-acetyl-alpha-D-galactosaminyl derivative + CMP-N-acetyl-beta-neuraminate = an N-acetyl-alpha-neuraminyl-(2-&gt;3)-beta-D-galactosyl-(1-&gt;3)-N-acetyl-alpha-D-galactosaminyl derivative + CMP + H(+). The enzyme catalyses a ganglioside GM1 (d18:1(4E)) + CMP-N-acetyl-beta-neuraminate = a ganglioside GD1a (d18:1(4E)) + CMP + H(+). It carries out the reaction ganglioside GM1 (d18:1(4E)/18:0) + CMP-N-acetyl-beta-neuraminate = ganglioside GD1a (18:1(4E)/18:0) + CMP + H(+). The catalysed reaction is a ganglioside GA1 + CMP-N-acetyl-beta-neuraminate = a ganglioside GM1b + CMP + H(+). It catalyses the reaction a ganglioside GA1 (d18:1(4E)) + CMP-N-acetyl-beta-neuraminate = a ganglioside GM1b (d18:1(4E)) + CMP + H(+). The enzyme catalyses a ganglioside GD1b + CMP-N-acetyl-beta-neuraminate = a ganglioside GT1b + CMP + H(+). It carries out the reaction a ganglioside GD1b (d18:1(4E)) + CMP-N-acetyl-beta-neuraminate = a ganglioside GT1b (d18:1(4E)) + CMP + H(+). The catalysed reaction is a globoside GalGb4Cer + CMP-N-acetyl-beta-neuraminate = a globoside MSGG + CMP + H(+). The protein operates within protein modification; protein glycosylation. Its pathway is glycolipid biosynthesis. In terms of biological role, a beta-galactoside alpha2-3 sialyltransferase primarily involved in terminal sialylation of ganglio and globo series glycolipids. Catalyzes the transfer of sialic acid (N-acetyl-neuraminic acid; Neu5Ac) from the nucleotide sugar donor CMP-Neu5Ac onto acceptor Galbeta-(1-&gt;3)-GalNAc-terminated glycoconjugates through an alpha2-3 linkage. Sialylates GM1/GM1a, GA1/asialo-GM1 and GD1b gangliosides to form GD1a, GM1b and GT1b, respectively. Together with ST3GAL3, primarily responsible for biosynthesis of brain GD1a and GT1b that function as ligands for myelin-associated glycoprotein MAG on axons, regulating MAG expression and axonal myelin stability and regeneration. Via GT1b regulates TLR2 signaling in spinal cord microglia in response to nerve injury. Responsible for the sialylation of the pluripotent stem cell- and cancer stem cell-associated antigen SSEA3, forming SSEA4. Sialylates with low efficiency asialofetuin, presumably onto O-glycosidically linked Galbeta-(1-&gt;3)-GalNAc-O-Ser. The chain is CMP-N-acetylneuraminate-beta-galactosamide-alpha-2,3-sialyltransferase 2 from Mus musculus (Mouse).